We begin with the raw amino-acid sequence, 380 residues long: Histidinol-phosphate aminotransferase (380 aa).

Lys235 bears the N6-(pyridoxal phosphate)lysine mark.

The protein belongs to the class-II pyridoxal-phosphate-dependent aminotransferase family. Histidinol-phosphate aminotransferase subfamily. Homodimer. Pyridoxal 5'-phosphate is required as a cofactor.

The enzyme catalyses L-histidinol phosphate + 2-oxoglutarate = 3-(imidazol-4-yl)-2-oxopropyl phosphate + L-glutamate. It functions in the pathway amino-acid biosynthesis; L-histidine biosynthesis; L-histidine from 5-phospho-alpha-D-ribose 1-diphosphate: step 7/9. This chain is Histidinol-phosphate aminotransferase, found in Rhodococcus opacus (strain B4).